Here is a 434-residue protein sequence, read N- to C-terminus: MSIITDVYAREVLDSRGNPTLEVEVYTESGAFGRGMVPSGASTGEHEAVELRDGDKSRYGGLGTQKAVDNVNNVIAEAIIGYDVRDQQAIDRAMIALDGTPNKGKLGANAILGVSIAVARAAADYLEVPLYSYLGGFNTKVLPTPMMNIINGGSHSDAPIAFQEFMILPVGAPTFKEALRYGAEIFHALKKILKSRGLETAVGDEGGFAPRFEGTEDGVETIIAAIEAAGYVPGKDVFIGFDCASSEFYDKERKVYDYTKFEGEGAAVRTSAEQIDYLEELVNKYPIITIEDGMDENDWDGWKALTERLGKKVQLVGDDFFVTNTDYLARGIKEGAANSILIKVNQIGTLTETFEAIEMAKEAGYTAVVSHRSGETEDSTIADIAVATNAGQIKTGSLSRTDRIAKYNQLLRIEDQLGEVAQYKGLQAFYNLKK.

(2R)-2-phosphoglycerate is bound at residue Gln-163. The Proton donor role is filled by Glu-205. 3 residues coordinate Mg(2+): Asp-242, Glu-291, and Asp-318. Residues Lys-343, Arg-372, Ser-373, and Lys-394 each contribute to the (2R)-2-phosphoglycerate site. Lys-343 acts as the Proton acceptor in catalysis.

This sequence belongs to the enolase family. Mg(2+) serves as cofactor.

The protein resides in the cytoplasm. It localises to the secreted. It is found in the cell surface. The catalysed reaction is (2R)-2-phosphoglycerate = phosphoenolpyruvate + H2O. It participates in carbohydrate degradation; glycolysis; pyruvate from D-glyceraldehyde 3-phosphate: step 4/5. Functionally, catalyzes the reversible conversion of 2-phosphoglycerate (2-PG) into phosphoenolpyruvate (PEP). It is essential for the degradation of carbohydrates via glycolysis. The polypeptide is Enolase (Streptococcus sanguinis (strain SK36)).